A 538-amino-acid polypeptide reads, in one-letter code: Pentatricopeptide repeat-containing protein At1g33350 (538 aa).

PPR repeat units lie at residues 87–123 (NTHL…SVPR), 125–159 (NHFI…GFHL), 160–191 (YVVV…MSER), 192–226 (NVVS…DVPS), 227–253 (WNAI…MINE), 259–293 (NEVT…DLSS), 294–324 (DVFV…ASKK), 325–359 (SLTA…NIND), 363–398 (DHIT…GIEP), and 399–433 (RIEH…ADEA). A type E motif region spans residues 434 to 509 (IWGSLLNACK…PPGWSRIEID (76 aa)).

This sequence belongs to the PPR family. PCMP-E subfamily.

The protein is Pentatricopeptide repeat-containing protein At1g33350 (PCMP-E57) of Arabidopsis thaliana (Mouse-ear cress).